A 63-amino-acid polypeptide reads, in one-letter code: Large ribosomal subunit protein bL35 (63 aa).

Belongs to the bacterial ribosomal protein bL35 family.

This chain is Large ribosomal subunit protein bL35, found in Sulfurimonas denitrificans (strain ATCC 33889 / DSM 1251) (Thiomicrospira denitrificans (strain ATCC 33889 / DSM 1251)).